A 60-amino-acid polypeptide reads, in one-letter code: Cecropin-B type 1 (60 aa).

Residues 1–24 (MNFNKLFALVLLIGLVLLTGQTEA) form the signal peptide. The residue at position 58 (Ile58) is an Isoleucine amide.

It belongs to the cecropin family.

Its subcellular location is the secreted. Functionally, cecropins have lytic and antibacterial activity against several Gram-positive and Gram-negative bacteria. The sequence is that of Cecropin-B type 1 (CECB1) from Aedes albopictus (Asian tiger mosquito).